A 392-amino-acid polypeptide reads, in one-letter code: Ribosomal RNA large subunit methyltransferase G (392 aa).

It belongs to the methyltransferase superfamily. RlmG family.

Its subcellular location is the cytoplasm. The catalysed reaction is guanosine(1835) in 23S rRNA + S-adenosyl-L-methionine = N(2)-methylguanosine(1835) in 23S rRNA + S-adenosyl-L-homocysteine + H(+). In terms of biological role, specifically methylates the guanine in position 1835 (m2G1835) of 23S rRNA. The protein is Ribosomal RNA large subunit methyltransferase G of Colwellia psychrerythraea (strain 34H / ATCC BAA-681) (Vibrio psychroerythus).